The sequence spans 126 residues: Holo-[acyl-carrier-protein] synthase (126 aa).

Mg(2+)-binding residues include aspartate 9 and glutamate 58.

The protein belongs to the P-Pant transferase superfamily. AcpS family. The cofactor is Mg(2+).

It is found in the cytoplasm. The catalysed reaction is apo-[ACP] + CoA = holo-[ACP] + adenosine 3',5'-bisphosphate + H(+). Its function is as follows. Transfers the 4'-phosphopantetheine moiety from coenzyme A to a Ser of acyl-carrier-protein. The sequence is that of Holo-[acyl-carrier-protein] synthase from Aliivibrio fischeri (strain MJ11) (Vibrio fischeri).